Reading from the N-terminus, the 265-residue chain is tRNA pseudouridine synthase A (265 aa).

Catalysis depends on Asp58, which acts as the Nucleophile. Tyr116 lines the substrate pocket.

The protein belongs to the tRNA pseudouridine synthase TruA family. In terms of assembly, homodimer.

It catalyses the reaction uridine(38/39/40) in tRNA = pseudouridine(38/39/40) in tRNA. Its function is as follows. Formation of pseudouridine at positions 38, 39 and 40 in the anticodon stem and loop of transfer RNAs. The sequence is that of tRNA pseudouridine synthase A from Neisseria gonorrhoeae (strain NCCP11945).